We begin with the raw amino-acid sequence, 61 residues long: Peroxidase 1 (61 aa).

The segment at 1–32 (DNTAKEKDSPANLSLRTCAAGDNAEQPLDPSR) is disordered. An N-linked (GlcNAc...) asparagine glycan is attached at Asn12. Positions 29, 31, and 36 each coordinate Ca(2+).

The protein belongs to the peroxidase family. Classical plant (class III) peroxidase subfamily. Ca(2+) serves as cofactor. Requires heme b as cofactor.

Its subcellular location is the secreted. The catalysed reaction is 2 a phenolic donor + H2O2 = 2 a phenolic radical donor + 2 H2O. Functionally, removal of H(2)O(2), oxidation of toxic reductants, biosynthesis and degradation of lignin, suberization, auxin catabolism, response to environmental stresses such as wounding, pathogen attack and oxidative stress. These functions might be dependent on each isozyme/isoform in each plant tissue. This Vitis rotundifolia (Muscadine grape) protein is Peroxidase 1.